Here is a 142-residue protein sequence, read N- to C-terminus: Nucleoside diphosphate kinase (142 aa).

ATP-binding residues include Lys-11, Phe-59, Arg-87, Thr-93, Arg-107, and Asn-117. His-120 (pros-phosphohistidine intermediate) is an active-site residue.

Belongs to the NDK family. In terms of assembly, homotetramer. It depends on Mg(2+) as a cofactor.

Its subcellular location is the cytoplasm. It carries out the reaction a 2'-deoxyribonucleoside 5'-diphosphate + ATP = a 2'-deoxyribonucleoside 5'-triphosphate + ADP. It catalyses the reaction a ribonucleoside 5'-diphosphate + ATP = a ribonucleoside 5'-triphosphate + ADP. Major role in the synthesis of nucleoside triphosphates other than ATP. The ATP gamma phosphate is transferred to the NDP beta phosphate via a ping-pong mechanism, using a phosphorylated active-site intermediate. In Aquifex aeolicus (strain VF5), this protein is Nucleoside diphosphate kinase.